A 255-amino-acid chain; its full sequence is 3-deoxy-manno-octulosonate cytidylyltransferase (255 aa).

This sequence belongs to the KdsB family.

It is found in the cytoplasm. The catalysed reaction is 3-deoxy-alpha-D-manno-oct-2-ulosonate + CTP = CMP-3-deoxy-beta-D-manno-octulosonate + diphosphate. It functions in the pathway nucleotide-sugar biosynthesis; CMP-3-deoxy-D-manno-octulosonate biosynthesis; CMP-3-deoxy-D-manno-octulosonate from 3-deoxy-D-manno-octulosonate and CTP: step 1/1. The protein operates within bacterial outer membrane biogenesis; lipopolysaccharide biosynthesis. Activates KDO (a required 8-carbon sugar) for incorporation into bacterial lipopolysaccharide in Gram-negative bacteria. The polypeptide is 3-deoxy-manno-octulosonate cytidylyltransferase (Pelobacter propionicus (strain DSM 2379 / NBRC 103807 / OttBd1)).